The sequence spans 347 residues: Phosphoribosylformylglycinamidine cyclo-ligase (347 aa).

Belongs to the AIR synthase family.

It is found in the cytoplasm. The enzyme catalyses 2-formamido-N(1)-(5-O-phospho-beta-D-ribosyl)acetamidine + ATP = 5-amino-1-(5-phospho-beta-D-ribosyl)imidazole + ADP + phosphate + H(+). The protein operates within purine metabolism; IMP biosynthesis via de novo pathway; 5-amino-1-(5-phospho-D-ribosyl)imidazole from N(2)-formyl-N(1)-(5-phospho-D-ribosyl)glycinamide: step 2/2. This is Phosphoribosylformylglycinamidine cyclo-ligase from Hydrogenovibrio crunogenus (strain DSM 25203 / XCL-2) (Thiomicrospira crunogena).